Consider the following 210-residue polypeptide: Small ribosomal subunit protein uS4 (210 aa).

The region spanning 99–170 is the S4 RNA-binding domain; sequence RRLDNAVFRA…NLEAVVRRGV (72 aa).

This sequence belongs to the universal ribosomal protein uS4 family. As to quaternary structure, part of the 30S ribosomal subunit. Contacts protein S5. The interaction surface between S4 and S5 is involved in control of translational fidelity.

One of the primary rRNA binding proteins, it binds directly to 16S rRNA where it nucleates assembly of the body of the 30S subunit. Its function is as follows. With S5 and S12 plays an important role in translational accuracy. This is Small ribosomal subunit protein uS4 from Desulfotalea psychrophila (strain LSv54 / DSM 12343).